A 404-amino-acid chain; its full sequence is Cysteine desulfurase IscS (404 aa).

Pyridoxal 5'-phosphate contacts are provided by residues 75–76 (AT), Asn-155, Gln-183, and 203–205 (SGH). Lys-206 is subject to N6-(pyridoxal phosphate)lysine. Thr-243 provides a ligand contact to pyridoxal 5'-phosphate. Catalysis depends on Cys-328, which acts as the Cysteine persulfide intermediate. Cys-328 is a binding site for [2Fe-2S] cluster.

The protein belongs to the class-V pyridoxal-phosphate-dependent aminotransferase family. NifS/IscS subfamily. As to quaternary structure, homodimer. Forms a heterotetramer with IscU, interacts with other sulfur acceptors. Requires pyridoxal 5'-phosphate as cofactor.

The protein resides in the cytoplasm. The enzyme catalyses (sulfur carrier)-H + L-cysteine = (sulfur carrier)-SH + L-alanine. The protein operates within cofactor biosynthesis; iron-sulfur cluster biosynthesis. Functionally, master enzyme that delivers sulfur to a number of partners involved in Fe-S cluster assembly, tRNA modification or cofactor biosynthesis. Catalyzes the removal of elemental sulfur atoms from cysteine to produce alanine. Functions as a sulfur delivery protein for Fe-S cluster synthesis onto IscU, an Fe-S scaffold assembly protein, as well as other S acceptor proteins. The protein is Cysteine desulfurase IscS of Shewanella frigidimarina (strain NCIMB 400).